A 169-amino-acid chain; its full sequence is Succinate dehydrogenase cytochrome b560 subunit, mitochondrial (169 aa).

The transit peptide at 1 to 29 (MAALLLRHVGRHCLRAHLSPQLCIRNAVP) directs the protein to the mitochondrion. Topologically, residues 30-62 (LGTTAKEEMERFWSKNTTLNRPLSPHISIYGWS) are mitochondrial matrix. The chain crosses the membrane as a helical span at residues 63–92 (LPMAMSICHRGTGIALSAGVSLFGLSALLV). The Mitochondrial intermembrane segment spans residues 93–112 (PGSFESHLEFVKSLCLGPAL). A helical membrane pass occupies residues 113 to 137 (IHTAKFALVFPLMYHTWNGIRHLMW). Heme b is bound at residue His-127. The Mitochondrial matrix portion of the chain corresponds to 138–144 (DLGKGLT). Residues 145-166 (ISQLHQSGVAVLVLTVLSSVGL) traverse the membrane as a helical segment. Over 167–169 (AAM) the chain is Mitochondrial intermembrane.

It belongs to the cytochrome b560 family. Component of complex II composed of four subunits: the flavoprotein (FP) SDHA, iron-sulfur protein (IP) SDHB, and a cytochrome b560 composed of SDHC and SDHD. Requires heme b as cofactor. In terms of processing, the N-terminus is blocked.

It localises to the mitochondrion inner membrane. The protein operates within carbohydrate metabolism; tricarboxylic acid cycle. In terms of biological role, membrane-anchoring subunit of succinate dehydrogenase (SDH) that is involved in complex II of the mitochondrial electron transport chain and is responsible for transferring electrons from succinate to ubiquinone (coenzyme Q). SDH also oxidizes malate to the non-canonical enol form of oxaloacetate, enol-oxaloacetate. Enol-oxaloacetate, which is a potent inhibitor of the succinate dehydrogenase activity, is further isomerized into keto-oxaloacetate. The protein is Succinate dehydrogenase cytochrome b560 subunit, mitochondrial (SDHC) of Bos taurus (Bovine).